Reading from the N-terminus, the 78-residue chain is Large ribosomal subunit protein bL28 (78 aa).

The segment at 1–21 (MARVCQVTGKGPMTGNNVSHA) is disordered.

The protein belongs to the bacterial ribosomal protein bL28 family.

The chain is Large ribosomal subunit protein bL28 from Bordetella petrii (strain ATCC BAA-461 / DSM 12804 / CCUG 43448).